Consider the following 195-residue polypeptide: Large ribosomal subunit protein eL6 (195 aa).

2 positions are modified to phosphoserine: S105 and S115.

This sequence belongs to the eukaryotic ribosomal protein eL6 family. In terms of assembly, component of the large ribosomal subunit (LSU). Mature yeast ribosomes consist of a small (40S) and a large (60S) subunit. The 40S small subunit contains 1 molecule of ribosomal RNA (18S rRNA) and at least 33 different proteins. The large 60S subunit contains 3 rRNA molecules (25S, 5.8S and 5S rRNA) and at least 46 different proteins.

It localises to the cytoplasm. Its subcellular location is the nucleus. It is found in the nucleolus. Functionally, component of the ribosome, a large ribonucleoprotein complex responsible for the synthesis of proteins in the cell. The small ribosomal subunit (SSU) binds messenger RNAs (mRNAs) and translates the encoded message by selecting cognate aminoacyl-transfer RNA (tRNA) molecules. The large subunit (LSU) contains the ribosomal catalytic site termed the peptidyl transferase center (PTC), which catalyzes the formation of peptide bonds, thereby polymerizing the amino acids delivered by tRNAs into a polypeptide chain. The nascent polypeptides leave the ribosome through a tunnel in the LSU and interact with protein factors that function in enzymatic processing, targeting, and the membrane insertion of nascent chains at the exit of the ribosomal tunnel. This is Large ribosomal subunit protein eL6 (rpl6) from Schizosaccharomyces pombe (strain 972 / ATCC 24843) (Fission yeast).